The sequence spans 120 residues: NAD(P)H-quinone oxidoreductase subunit 3, chloroplastic (120 aa).

3 helical membrane passes run 2 to 22 (FLLY…VIPI), 64 to 84 (MFAL…PWAL), and 88 to 108 (ILGV…VLGL).

It belongs to the complex I subunit 3 family. As to quaternary structure, NDH is composed of at least 16 different subunits, 5 of which are encoded in the nucleus.

Its subcellular location is the plastid. It is found in the chloroplast thylakoid membrane. The enzyme catalyses a plastoquinone + NADH + (n+1) H(+)(in) = a plastoquinol + NAD(+) + n H(+)(out). The catalysed reaction is a plastoquinone + NADPH + (n+1) H(+)(in) = a plastoquinol + NADP(+) + n H(+)(out). Functionally, NDH shuttles electrons from NAD(P)H:plastoquinone, via FMN and iron-sulfur (Fe-S) centers, to quinones in the photosynthetic chain and possibly in a chloroplast respiratory chain. The immediate electron acceptor for the enzyme in this species is believed to be plastoquinone. Couples the redox reaction to proton translocation, and thus conserves the redox energy in a proton gradient. The sequence is that of NAD(P)H-quinone oxidoreductase subunit 3, chloroplastic from Oenothera biennis (German evening primrose).